A 319-amino-acid chain; its full sequence is Acetyl esterase (319 aa).

Residues 91–93 (HGG) carry the Involved in the stabilization of the negatively charged intermediate by the formation of the oxyanion hole motif. Catalysis depends on residues Ser-165, Asp-262, and His-292.

It belongs to the 'GDXG' lipolytic enzyme family. As to quaternary structure, homodimer. Interacts with MalT and MelA.

The protein localises to the cytoplasm. Displays esterase activity towards short chain fatty esters (acyl chain length of up to 8 carbons). Able to hydrolyze triacetylglycerol (triacetin) and tributyrylglycerol (tributyrin), but not trioleylglycerol (triolein) or cholesterol oleate. Negatively regulates MalT activity by antagonizing maltotriose binding. Inhibits MelA galactosidase activity. This is Acetyl esterase from Escherichia coli O139:H28 (strain E24377A / ETEC).